The chain runs to 434 residues: Nicotinate phosphoribosyltransferase (434 aa).

H242 carries the post-translational modification Phosphohistidine; by autocatalysis.

This sequence belongs to the NAPRTase family. Post-translationally, transiently phosphorylated on a His residue during the reaction cycle. Phosphorylation strongly increases the affinity for substrates and increases the rate of nicotinate D-ribonucleotide production. Dephosphorylation regenerates the low-affinity form of the enzyme, leading to product release.

It carries out the reaction nicotinate + 5-phospho-alpha-D-ribose 1-diphosphate + ATP + H2O = nicotinate beta-D-ribonucleotide + ADP + phosphate + diphosphate. It participates in cofactor biosynthesis; NAD(+) biosynthesis; nicotinate D-ribonucleotide from nicotinate: step 1/1. Its function is as follows. Catalyzes the synthesis of beta-nicotinate D-ribonucleotide from nicotinate and 5-phospho-D-ribose 1-phosphate at the expense of ATP. The chain is Nicotinate phosphoribosyltransferase from Rhizobium etli (strain ATCC 51251 / DSM 11541 / JCM 21823 / NBRC 15573 / CFN 42).